Here is an 86-residue protein sequence, read N- to C-terminus: Anti-adapter protein IraP (86 aa).

Positions Met1–Leu36 form a coiled coil.

It belongs to the IraP family. As to quaternary structure, interacts with RssB.

The protein localises to the cytoplasm. Functionally, inhibits RpoS proteolysis by regulating RssB activity, thereby increasing the stability of the sigma stress factor RpoS especially during phosphate starvation, but also in stationary phase and during nitrogen starvation. Its effect on RpoS stability is due to its interaction with RssB, which probably blocks the interaction of RssB with RpoS, and the consequent delivery of the RssB-RpoS complex to the ClpXP protein degradation pathway. This is Anti-adapter protein IraP from Cronobacter sakazakii (strain ATCC BAA-894) (Enterobacter sakazakii).